Consider the following 474-residue polypeptide: Trehalose-6-phosphate synthase (474 aa).

Arginine 10 is a D-glucose 6-phosphate binding site. 22–23 serves as a coordination point for UDP-alpha-D-glucose; it reads GG. Residues tyrosine 77 and aspartate 131 each coordinate D-glucose 6-phosphate. Residues arginine 263 and lysine 268 each coordinate UDP-alpha-D-glucose. Arginine 301 lines the D-glucose 6-phosphate pocket. UDP-alpha-D-glucose-binding positions include phenylalanine 340 and 366-370; that span reads LVAKE.

It belongs to the glycosyltransferase 20 family. Homotetramer.

It carries out the reaction D-glucose 6-phosphate + UDP-alpha-D-glucose = alpha,alpha-trehalose 6-phosphate + UDP + H(+). It functions in the pathway glycan biosynthesis; trehalose biosynthesis. Functionally, probably involved in the osmoprotection via the biosynthesis of trehalose. Catalyzes the transfer of glucose from UDP-alpha-D-glucose (UDP-Glc) to D-glucose 6-phosphate (Glc-6-P) to form trehalose-6-phosphate. Acts with retention of the anomeric configuration of the UDP-sugar donor. This Escherichia coli O6:K15:H31 (strain 536 / UPEC) protein is Trehalose-6-phosphate synthase.